A 478-amino-acid chain; its full sequence is Aspartyl/glutamyl-tRNA(Asn/Gln) amidotransferase subunit B (478 aa).

Belongs to the GatB/GatE family. GatB subfamily. In terms of assembly, heterotrimer of A, B and C subunits.

The enzyme catalyses L-glutamyl-tRNA(Gln) + L-glutamine + ATP + H2O = L-glutaminyl-tRNA(Gln) + L-glutamate + ADP + phosphate + H(+). The catalysed reaction is L-aspartyl-tRNA(Asn) + L-glutamine + ATP + H2O = L-asparaginyl-tRNA(Asn) + L-glutamate + ADP + phosphate + 2 H(+). In terms of biological role, allows the formation of correctly charged Asn-tRNA(Asn) or Gln-tRNA(Gln) through the transamidation of misacylated Asp-tRNA(Asn) or Glu-tRNA(Gln) in organisms which lack either or both of asparaginyl-tRNA or glutaminyl-tRNA synthetases. The reaction takes place in the presence of glutamine and ATP through an activated phospho-Asp-tRNA(Asn) or phospho-Glu-tRNA(Gln). The sequence is that of Aspartyl/glutamyl-tRNA(Asn/Gln) amidotransferase subunit B from Lachnoclostridium phytofermentans (strain ATCC 700394 / DSM 18823 / ISDg) (Clostridium phytofermentans).